We begin with the raw amino-acid sequence, 217 residues long: NAD(P)H-quinone oxidoreductase subunit M, chloroplastic (217 aa).

The N-terminal 21 residues, 1-21 (MVAAFSYTACTKLSLLHPSMV), are a transit peptide targeting the chloroplast. Residues 48 to 67 (ETETLKEEQSTEKMKKQPTP) are disordered. A compositionally biased stretch (basic and acidic residues) spans 50–62 (ETLKEEQSTEKMK).

Belongs to the NDH complex subunit M family. As to quaternary structure, part of the chloroplast NDH complex, composed of a mixture of chloroplast and nucleus encoded subunits. Component of the NDH subcomplex A, at least composed of ndhH, ndhI, ndhJ, ndhK, ndhL, ndhM, ndhN and ndhO.

It is found in the plastid. Its subcellular location is the chloroplast thylakoid membrane. It catalyses the reaction a plastoquinone + NADH + (n+1) H(+)(in) = a plastoquinol + NAD(+) + n H(+)(out). It carries out the reaction a plastoquinone + NADPH + (n+1) H(+)(in) = a plastoquinol + NADP(+) + n H(+)(out). Its function is as follows. NDH shuttles electrons from NAD(P)H:plastoquinone, via FMN and iron-sulfur (Fe-S) centers, to quinones in the photosynthetic chain and possibly in a chloroplast respiratory chain. The immediate electron acceptor for the enzyme in this species is believed to be plastoquinone. Couples the redox reaction to proton translocation, and thus conserves the redox energy in a proton gradient. This chain is NAD(P)H-quinone oxidoreductase subunit M, chloroplastic, found in Arabidopsis thaliana (Mouse-ear cress).